Consider the following 87-residue polypeptide: Tektin-2 (87 aa).

Positions 26–55 (VEEELLKEVEVIEATKKALQQRVSQAFQQL) form a coiled coil.

This sequence belongs to the tektin family. Microtubule inner protein component of sperm flagellar doublet microtubules. May interact with CCDC172. In terms of processing, tyrosine phosphorylated. Ubiquitinated, leading to its degradation. Deubiquitinated by USP16, promoting its stability. Detected in sperm flagella (at protein level).

The protein resides in the cytoplasm. The protein localises to the cytoskeleton. It is found in the cilium axoneme. It localises to the flagellum axoneme. Its subcellular location is the microtubule organizing center. In terms of biological role, microtubule inner protein (MIP) part of the dynein-decorated doublet microtubules (DMTs) in cilia and flagellar axoneme. Plays a key role in the assembly or attachment of the inner dynein arm to microtubules in sperm flagella and tracheal cilia. Forms filamentous polymers in the walls of ciliary and flagellar microtubules. This is Tektin-2 from Mesocricetus auratus (Golden hamster).